The sequence spans 115 residues: Salivary anti-complement protein (115 aa).

An N-terminal signal peptide occupies residues Met-1–Cys-22. 3 disulfides stabilise this stretch: Cys-26–Cys-108, Cys-41–Cys-92, and Cys-83–Cys-101.

As to quaternary structure, may form multimers. As to expression, salivary gland (at protein level).

The protein localises to the secreted. Functionally, salivary protein that inhibits the classical pathway of complement system activation in the host while having no inhibitory effect on the alternative or lectin pathways. Prevent cleavage of host C4 and consequently impairs the activation of factors downstream of C4b in the complement cascade. This Lutzomyia longipalpis (Sand fly) protein is Salivary anti-complement protein.